A 237-amino-acid polypeptide reads, in one-letter code: Mannose-specific lectin alpha chain (237 aa).

The Mn(2+) site is built by Glu8 and Asp10. The Ca(2+) site is built by Asp10, Tyr12, Asn14, and Asp19. Tyr12 lines the a carbohydrate pocket. 3 residues coordinate Mn(2+): Asp19, His24, and Ser34. 99-100 (LY) provides a ligand contact to a carbohydrate. Asp208 lines the Ca(2+) pocket. An a carbohydrate-binding site is contributed by Arg228.

The protein belongs to the leguminous lectin family. As to quaternary structure, homotetramer. Post-translationally, the beta and gamma chains are produced by partial proteolytic processing of the lectin alpha chain by an asparaginyl endopeptidase.

D-mannose/D-glucose-binding lectin. Also binds derivatives of glucose and mannose such as more complex glycans. The protein is Mannose-specific lectin alpha chain of Cymbosema roseum (Dioclea purpurea).